Reading from the N-terminus, the 85-residue chain is Insect toxin 2-53 (85 aa).

A signal peptide spans 1 to 21 (MKLLLLLIVSASMLIESLVNA). The region spanning 22–82 (DGYIKRRDGC…TWKSETNTCG (61 aa)) is the LCN-type CS-alpha/beta domain. 4 disulfides stabilise this stretch: Cys-31-Cys-81, Cys-35-Cys-56, Cys-42-Cys-63, and Cys-46-Cys-65. Gly-82 bears the Glycine amide mark.

This sequence belongs to the long (4 C-C) scorpion toxin superfamily. Sodium channel inhibitor family. Beta subfamily. In terms of tissue distribution, expressed by the venom gland.

The protein resides in the secreted. In terms of biological role, depressant insect toxins cause a transient contraction paralysis followed by a slow flaccid paralysis. They bind voltage-independently to sodium channels (Nav) and block action potentials, primarily by depolarizing the axonal membrane and suppressing the sodium current. This chain is Insect toxin 2-53, found in Leiurus hebraeus (Hebrew deathstalker scorpion).